A 489-amino-acid chain; its full sequence is Kynureninase 2 (489 aa).

Residues 1-12 (MDASAAISQLRQ) show a composition bias toward polar residues. The interval 1–25 (MDASAAISQLRQGQKPEWPQNANTS) is disordered. Residues Leu149, Thr150, 177-180 (FPSD), Asp261, His264, and Tyr286 contribute to the pyridoxal 5'-phosphate site. Residue Lys287 is modified to N6-(pyridoxal phosphate)lysine. Trp317 and Asn345 together coordinate pyridoxal 5'-phosphate.

Belongs to the kynureninase family. As to quaternary structure, homodimer. It depends on pyridoxal 5'-phosphate as a cofactor.

Its subcellular location is the cytoplasm. It carries out the reaction L-kynurenine + H2O = anthranilate + L-alanine + H(+). It catalyses the reaction 3-hydroxy-L-kynurenine + H2O = 3-hydroxyanthranilate + L-alanine + H(+). It functions in the pathway amino-acid degradation; L-kynurenine degradation; L-alanine and anthranilate from L-kynurenine: step 1/1. The protein operates within cofactor biosynthesis; NAD(+) biosynthesis; quinolinate from L-kynurenine: step 2/3. Catalyzes the cleavage of L-kynurenine (L-Kyn) and L-3-hydroxykynurenine (L-3OHKyn) into anthranilic acid (AA) and 3-hydroxyanthranilic acid (3-OHAA), respectively. This chain is Kynureninase 2, found in Phaeosphaeria nodorum (strain SN15 / ATCC MYA-4574 / FGSC 10173) (Glume blotch fungus).